A 305-amino-acid polypeptide reads, in one-letter code: tRNA dimethylallyltransferase (305 aa).

Position 8-15 (8-15 (GPTAIGKS)) interacts with ATP. 10–15 (TAIGKS) is a binding site for substrate. Residues 33–36 (DSMA) are interaction with substrate tRNA.

Belongs to the IPP transferase family. In terms of assembly, monomer. The cofactor is Mg(2+).

The catalysed reaction is adenosine(37) in tRNA + dimethylallyl diphosphate = N(6)-dimethylallyladenosine(37) in tRNA + diphosphate. Its function is as follows. Catalyzes the transfer of a dimethylallyl group onto the adenine at position 37 in tRNAs that read codons beginning with uridine, leading to the formation of N6-(dimethylallyl)adenosine (i(6)A). The sequence is that of tRNA dimethylallyltransferase from Aquifex aeolicus (strain VF5).